Reading from the N-terminus, the 584-residue chain is Inactive metallocarboxypeptidase ECM14 (584 aa).

The first 20 residues, 1 to 20 (MHLLPVITAVALIYTPLASA), serve as a signal peptide directing secretion. Positions 21 to 174 (VPSSSNPQFP…QAVYESYPQP (154 aa)) are excised as a propeptide. Positions 202–524 (DYQPLSVMTP…NAVLEFGKFL (323 aa)) constitute a Peptidase M14 domain. His267 and Glu270 together coordinate Zn(2+). Residues 267 to 270 (HARE), Arg325, and 342 to 343 (DR) each bind substrate. A disulfide bridge connects residues Cys336 and Cys359. Asn383 and Asn389 each carry an N-linked (GlcNAc...) asparagine glycan. His399 provides a ligand contact to Zn(2+). Substrate is bound at residue 400–401 (SY). The tract at residues 564-584 (QQLDDEDGEADSHWVLRTQRS) is disordered.

The protein belongs to the peptidase M14 family. Zn(2+) serves as cofactor.

It is found in the vacuole. Its subcellular location is the secreted. In terms of biological role, inactive carboxypeptidase that may play a role in cell wall organization and biogenesis. The protein is Inactive metallocarboxypeptidase ECM14 (ECM14) of Uncinocarpus reesii (strain UAMH 1704).